The primary structure comprises 391 residues: Polysialic acid biosynthesis protein P7 (391 aa).

Its function is as follows. May be involved in the synthesis of polysialic acid (PSA). This chain is Polysialic acid biosynthesis protein P7 (neuC), found in Escherichia coli.